The sequence spans 600 residues: Methionine--tRNA ligase (600 aa).

Residues 12–22 carry the 'HIGH' region motif; sequence PYANGPRHIGH. The Zn(2+) site is built by Cys-144, Cys-147, Cys-157, and Cys-160. Positions 351 to 355 match the 'KMSKS' region motif; it reads KFSSS. Position 354 (Ser-354) interacts with ATP.

The protein belongs to the class-I aminoacyl-tRNA synthetase family. MetG type 1 subfamily. As to quaternary structure, monomer. Zn(2+) is required as a cofactor.

It localises to the cytoplasm. The enzyme catalyses tRNA(Met) + L-methionine + ATP = L-methionyl-tRNA(Met) + AMP + diphosphate. Is required not only for elongation of protein synthesis but also for the initiation of all mRNA translation through initiator tRNA(fMet) aminoacylation. This Chloroflexus aggregans (strain MD-66 / DSM 9485) protein is Methionine--tRNA ligase.